The following is a 348-amino-acid chain: Rhodopsin (348 aa).

At Met-1 the chain carries N-acetylmethionine. Residues 1–36 lie on the Extracellular side of the membrane; sequence MNGTEGLNFYVPFSNKTGVVRSPFEYPQYYLAEPWQ. Residues Asn-2 and Asn-15 are each glycosylated (N-linked (GlcNAc...) asparagine). Residues 37 to 61 traverse the membrane as a helical segment; sequence FSVLAAYMFLLIVLGFPINFLTLYV. Residues 62–73 are Cytoplasmic-facing; the sequence is TVQHKKLRTPLN. The helical transmembrane segment at 74-96 threads the bilayer; that stretch reads YIPLNLAVANLFMVFGGFTTTLY. The Extracellular segment spans residues 97 to 110; that stretch reads TSLHAYFVFGPTGC. Cys-110 and Cys-187 are disulfide-bonded. The helical transmembrane segment at 111 to 133 threads the bilayer; it reads NLEGFFATLGGEIALWSLVVLAI. Residues 134-136 carry the 'Ionic lock' involved in activated form stabilization motif; it reads ERY. Residues 134–152 are Cytoplasmic-facing; it reads ERYVVVCKPMSNFRFGENH. Residues 153-173 traverse the membrane as a helical segment; it reads AIMGLALTWVMAMACAAPPLV. Residues 174–202 are Extracellular-facing; it reads GWSRYIPEGMQCSCGIDYYTSRQEVNNES. Zn(2+) is bound at residue Glu-201. Residues 203 to 224 traverse the membrane as a helical segment; that stretch reads FVIYMFVVHFTIPLVIIFFCYG. Residues 225–252 are Cytoplasmic-facing; sequence QLVFTVKEAAAQQQESATTQKAEKEVTR. Residues 253-274 traverse the membrane as a helical segment; the sequence is MVIIMVVAFLICWVPYASVAFY. Topologically, residues 275–286 are extracellular; that stretch reads IFTHQGSDFGPI. Residue Gln-279 participates in Zn(2+) binding. The chain crosses the membrane as a helical span at residues 287–308; that stretch reads FMTIPSFFAKSSSIYNPVIYIM. Lys-296 carries the post-translational modification N6-(retinylidene)lysine. Residues 309–348 are Cytoplasmic-facing; the sequence is MNKQLRNCMLTTLCCGRNPLGDDEASTTASKTETSQVAPA. S-palmitoyl cysteine attachment occurs at residues Cys-322 and Cys-323. The interaction with SAG stretch occupies residues 330 to 348; it reads DDEASTTASKTETSQVAPA. A Phosphoserine modification is found at Ser-334. Phosphothreonine occurs at positions 335 and 336. Residue Ser-338 is modified to Phosphoserine. 2 positions are modified to phosphothreonine: Thr-340 and Thr-342. Position 343 is a phosphoserine (Ser-343).

This sequence belongs to the G-protein coupled receptor 1 family. Opsin subfamily. Homodimer. May form a complex composed of RHO, GRK1 and RCVRN in a Ca(2+)-dependent manner; RCVRN prevents the interaction between GRK1 and RHO. Interacts with GRK1. Interacts (phosphorylated form) with SAG. Interacts with GNAT1. Interacts with GNAT3. SAG and G-proteins compete for a common binding site. Interacts with PRCD; the interaction promotes PRCD stability. Forms a complex with ASAP1 and ARF4. Forms a complex with ASAP1, RAB11A, Rabin8/RAB3IP, ARF4 and RAB11FIP3; the complex regulates Golgi-to-cilia rhodopsin/RHO transport in photoreceptors. Post-translationally, phosphorylated on some or all of the serine and threonine residues present in the C-terminal region. Contains one covalently linked retinal chromophore. Upon light absorption, the covalently bound 11-cis-retinal is converted to all-trans-retinal. After hydrolysis of the Schiff base and release of the covalently bound all-trans-retinal, active rhodopsin is regenerated by binding of a fresh molecule of 11-cis-retinal.

Its subcellular location is the membrane. It is found in the cell projection. The protein localises to the cilium. The protein resides in the photoreceptor outer segment. In terms of biological role, photoreceptor required for image-forming vision at low light intensity. Required for photoreceptor cell viability after birth. Light-induced isomerization of 11-cis to all-trans retinal triggers a conformational change that activates signaling via G-proteins. Subsequent receptor phosphorylation mediates displacement of the bound G-protein alpha subunit by the arrestin SAG and terminates signaling. This chain is Rhodopsin (RHO), found in Globicephala melas (Long-finned pilot whale).